A 280-amino-acid polypeptide reads, in one-letter code: Fe-S cluster assembly protein DRE2 (280 aa).

The N-terminal SAM-like domain stretch occupies residues 1–121 (MSNLLVFDNS…TTLLKKSGGG (121 aa)). Residues 122 to 176 (PKKFAFKRASPATAAPSTNGTNPAATVNLNSVVTLSMDDDDLMDEDDLMEDDTNL) are linker. [2Fe-2S] cluster-binding residues include Cys-186, Cys-198, Cys-201, and Cys-203. A fe-S binding site A region spans residues 186-203 (CDPGPGKKRRKACKDCTC). The [4Fe-4S] cluster site is built by Cys-244, Cys-247, Cys-255, and Cys-258. 2 consecutive short sequence motifs (cx2C motif) follow at residues 244 to 247 (CGSC) and 255 to 258 (CDGC). The fe-S binding site B stretch occupies residues 244 to 258 (CGSCALGDAFRCDGC).

It belongs to the anamorsin family. Monomer. Interacts with TAH18. Interacts with MIA40. [2Fe-2S] cluster is required as a cofactor. It depends on [4Fe-4S] cluster as a cofactor.

The protein resides in the cytoplasm. Its subcellular location is the mitochondrion intermembrane space. Functionally, component of the cytosolic iron-sulfur (Fe-S) protein assembly (CIA) machinery required for the maturation of extramitochondrial Fe-S proteins. Part of an electron transfer chain functioning in an early step of cytosolic Fe-S biogenesis, facilitating the de novo assembly of a [4Fe-4S] cluster on the scaffold complex CFD1-NBP35. Electrons are transferred to DRE2 from NADPH via the FAD- and FMN-containing protein TAH18. TAH18-DRE2 are also required for the assembly of the diferric tyrosyl radical cofactor of ribonucleotide reductase (RNR), probably by providing electrons for reduction during radical cofactor maturation in the catalytic small subunit RNR2. This is Fe-S cluster assembly protein DRE2 from Yarrowia lipolytica (strain CLIB 122 / E 150) (Yeast).